Here is a 184-residue protein sequence, read N- to C-terminus: Large ribosomal subunit protein eL18 (184 aa).

It belongs to the eukaryotic ribosomal protein eL18 family.

It localises to the cytoplasm. The polypeptide is Large ribosomal subunit protein eL18 (RPL18) (Theileria parva (East coast fever infection agent)).